The chain runs to 347 residues: Phenylalanine--tRNA ligase alpha subunit (347 aa).

Residue glutamate 265 participates in Mg(2+) binding.

It belongs to the class-II aminoacyl-tRNA synthetase family. Phe-tRNA synthetase alpha subunit type 1 subfamily. Tetramer of two alpha and two beta subunits. Mg(2+) is required as a cofactor.

Its subcellular location is the cytoplasm. The enzyme catalyses tRNA(Phe) + L-phenylalanine + ATP = L-phenylalanyl-tRNA(Phe) + AMP + diphosphate + H(+). The chain is Phenylalanine--tRNA ligase alpha subunit from Wolbachia sp. subsp. Drosophila simulans (strain wRi).